Reading from the N-terminus, the 578-residue chain is Glycosyltransferase family 92 protein RCOM_0530710 (578 aa).

The helical transmembrane segment at 21–43 (SFFSVRSLTACLSFFVFLLFISS) threads the bilayer. A GT92 domain is found at 295-531 (YELCACTMLW…QNQGSKDRAP (237 aa)).

It belongs to the glycosyltransferase 92 family.

Its subcellular location is the membrane. In Ricinus communis (Castor bean), this protein is Glycosyltransferase family 92 protein RCOM_0530710.